The primary structure comprises 531 residues: Peptide chain release factor 3 (531 aa).

The 270-residue stretch at 13–282 folds into the tr-type G domain; that stretch reads AKRRTFAIIS…TLIKYAPPPK (270 aa). Residues 22 to 29, 90 to 94, and 144 to 147 each bind GTP; these read SHPDAGKT, DTPGH, and NKLD.

This sequence belongs to the TRAFAC class translation factor GTPase superfamily. Classic translation factor GTPase family. PrfC subfamily.

The protein resides in the cytoplasm. Functionally, increases the formation of ribosomal termination complexes and stimulates activities of RF-1 and RF-2. It binds guanine nucleotides and has strong preference for UGA stop codons. It may interact directly with the ribosome. The stimulation of RF-1 and RF-2 is significantly reduced by GTP and GDP, but not by GMP. This is Peptide chain release factor 3 from Psychrobacter cryohalolentis (strain ATCC BAA-1226 / DSM 17306 / VKM B-2378 / K5).